Reading from the N-terminus, the 180-residue chain is Crossover junction endodeoxyribonuclease RuvC (180 aa).

Residues Asp-7, Glu-66, and Asp-138 contribute to the active site. Asp-7, Glu-66, and Asp-138 together coordinate Mg(2+).

Belongs to the RuvC family. In terms of assembly, homodimer which binds Holliday junction (HJ) DNA. The HJ becomes 2-fold symmetrical on binding to RuvC with unstacked arms; it has a different conformation from HJ DNA in complex with RuvA. In the full resolvosome a probable DNA-RuvA(4)-RuvB(12)-RuvC(2) complex forms which resolves the HJ. Requires Mg(2+) as cofactor.

Its subcellular location is the cytoplasm. The enzyme catalyses Endonucleolytic cleavage at a junction such as a reciprocal single-stranded crossover between two homologous DNA duplexes (Holliday junction).. The RuvA-RuvB-RuvC complex processes Holliday junction (HJ) DNA during genetic recombination and DNA repair. Endonuclease that resolves HJ intermediates. Cleaves cruciform DNA by making single-stranded nicks across the HJ at symmetrical positions within the homologous arms, yielding a 5'-phosphate and a 3'-hydroxyl group; requires a central core of homology in the junction. The consensus cleavage sequence is 5'-(A/T)TT(C/G)-3'. Cleavage occurs on the 3'-side of the TT dinucleotide at the point of strand exchange. HJ branch migration catalyzed by RuvA-RuvB allows RuvC to scan DNA until it finds its consensus sequence, where it cleaves and resolves the cruciform DNA. This is Crossover junction endodeoxyribonuclease RuvC from Burkholderia orbicola (strain AU 1054).